The sequence spans 490 residues: MKNLDPWEAVIGLETHVQLNTKSKIFTSASTAFGDEPNTHVDPVVCGLPGTLPVLNETVLEYAVKTSLALNLNVAEHCKFDRKQYFYPDLPKNYQISQFDEPLAENGWLEVEIAEKDKETYLKKIGIERLHMEEDAGKLVHAGSDRLAGSKYSLVDYNRAGIALVEIVSKPDIRTGREASEYASEIRRTVRYLGVSDGNMQEGSLRCDVNISVRRGPDSPFGTKVEIKNMNSFSAIQKACEYEIKRQIDVYENGGEIFQETRLWDEAKQLTKSMRLKEGSSDYRYFPDPDLGPIEISKEQKDQWLNELPELPSKKRHKYVKEFGLSPYDSRVISDEVFMANFFEETVANGADPKLASNWITSDIVGYLKSNKQIFADLKLSPIYLAEMINLISEKVISGKIAKDILPELIKKNISPQKLVKEKGLAMISDSDSILPIIEDLINEFPKEVASFKEGKTKLLGFFVGQLMKKTKGKVDPKLANKLLAEKLNS.

The protein belongs to the GatB/GatE family. GatB subfamily. As to quaternary structure, heterotrimer of A, B and C subunits.

The enzyme catalyses L-glutamyl-tRNA(Gln) + L-glutamine + ATP + H2O = L-glutaminyl-tRNA(Gln) + L-glutamate + ADP + phosphate + H(+). It catalyses the reaction L-aspartyl-tRNA(Asn) + L-glutamine + ATP + H2O = L-asparaginyl-tRNA(Asn) + L-glutamate + ADP + phosphate + 2 H(+). Functionally, allows the formation of correctly charged Asn-tRNA(Asn) or Gln-tRNA(Gln) through the transamidation of misacylated Asp-tRNA(Asn) or Glu-tRNA(Gln) in organisms which lack either or both of asparaginyl-tRNA or glutaminyl-tRNA synthetases. The reaction takes place in the presence of glutamine and ATP through an activated phospho-Asp-tRNA(Asn) or phospho-Glu-tRNA(Gln). The chain is Aspartyl/glutamyl-tRNA(Asn/Gln) amidotransferase subunit B from Prochlorococcus marinus (strain MIT 9515).